The following is a 206-amino-acid chain: Thymidylate kinase (206 aa).

Position 16 to 23 (16 to 23) interacts with ATP; that stretch reads GIDGTGKS.

Belongs to the thymidylate kinase family.

The catalysed reaction is dTMP + ATP = dTDP + ADP. In terms of biological role, phosphorylation of dTMP to form dTDP in both de novo and salvage pathways of dTTP synthesis. This Akkermansia muciniphila (strain ATCC BAA-835 / DSM 22959 / JCM 33894 / BCRC 81048 / CCUG 64013 / CIP 107961 / Muc) protein is Thymidylate kinase.